The chain runs to 448 residues: MKKEKTERTKQSWRKAQNAPSLSEVNNSVAIPKNAKFFRKLFAFMGPGALIAVGYVDPGNWATSIAGGSEFGYTLLSVILISNILAVLLQSLASKLGIVTGRDLAQASSDHFSKPFGFVLWILAELAIIATDIAEVIGSAIALNLLFGIPLIWGVCITALDIFLVLFLQHKGFRYIEVIVITLMVTILVCFGAEMVMSHPDMQAIAKGFIPQSEIVTNPAMLYIALGILGATVMPHNLYLHSSIVQTRQYARTKEGKKEAIRFSFIDSTFSLTIALLINASILILAAAAFYTTGQHNVAGIEDAYKLLNPTLGSSIASTVFAVALLASGQNSTLTGTLAGQIVMEGFLNIRLKPVVRRLLTRVLAIVPAVIITALYGANGINELLIFSQVILSMQLSFAVIPLVMFTSDKEKMGEFVNPSWLKIISWAVAIFIAILNIYLLFYTITTL.

The next 11 membrane-spanning stretches (helical) occupy residues 41 to 61, 69 to 89, 117 to 137, 147 to 167, 176 to 196, 215 to 235, 270 to 290, 307 to 327, 363 to 383, 384 to 404, and 424 to 444; these read LFAFMGPGALIAVGYVDPGNW, SEFGYTLLSVILISNILAVLL, GFVLWILAELAIIATDIAEVI, FGIPLIWGVCITALDIFLVLF, IEVIVITLMVTILVCFGAEMV, IVTNPAMLYIALGILGATVMP, FSLTIALLINASILILAAAAF, LLNPTLGSSIASTVFAVALLA, VLAIVPAVIITALYGANGINE, LLIFSQVILSMQLSFAVIPLV, and IISWAVAIFIAILNIYLLFYT.

The protein belongs to the NRAMP family.

It is found in the cell membrane. Functionally, h(+)-stimulated, divalent metal cation uptake system. The polypeptide is Divalent metal cation transporter MntH (Listeria welshimeri serovar 6b (strain ATCC 35897 / DSM 20650 / CCUG 15529 / CIP 8149 / NCTC 11857 / SLCC 5334 / V8)).